We begin with the raw amino-acid sequence, 253 residues long: MTNQLMALNQVSVRNRLMPLTALVQQGEQIHIIGPNGSGKSTLLACMAGILPYSGAIDLQQKCLSQYSHCQLARYRAWLSQQISSVPIMPVFQYLQLHLAAHLVNCDGVLSELCSFFKLGKFLETPVGNLSGGEWQRVRLTGVFLQVWPSINLEGKLLLLDEPTNNLDITQVAALDLLIKKFCELGGTVVMSGHDLNHSYDKADRIWLLADGSLVANGKPDEVMKENTLSRVFAADIKCVPEKTDKYWRVFLP.

Residues 1–236 (MTNQLMALNQ…NTLSRVFAAD (236 aa)) form the ABC transporter domain. Residue 34–41 (GPNGSGKS) coordinates ATP.

This sequence belongs to the ABC transporter superfamily. Vitamin B12 importer (TC 3.A.1.13.1) family. In terms of assembly, the complex is composed of two ATP-binding proteins (BtuD), two transmembrane proteins (BtuC) and a solute-binding protein (BtuF).

The protein resides in the cell inner membrane. The catalysed reaction is an R-cob(III)alamin(out) + ATP + H2O = an R-cob(III)alamin(in) + ADP + phosphate + H(+). In terms of biological role, part of the ABC transporter complex BtuCDF involved in vitamin B12 import. Responsible for energy coupling to the transport system. The sequence is that of Vitamin B12 import ATP-binding protein BtuD from Photorhabdus laumondii subsp. laumondii (strain DSM 15139 / CIP 105565 / TT01) (Photorhabdus luminescens subsp. laumondii).